The chain runs to 388 residues: Protein TsgA homolog (388 aa).

A run of 12 helical transmembrane segments spans residues 11–31 (WISF…GMIM), 50–70 (TFLN…IEII), 77–97 (IFSF…NSIF), 101–121 (INMF…TFII), 133–153 (LLLL…IVTA), 160–180 (IIWY…FLLT), 206–226 (VFLL…FISW), 244–264 (SLVS…SFII), 268–288 (NLYR…YCFI), 298–318 (YIII…ITLA), 332–352 (LILL…SPIV), and 360–380 (TLIS…LIYF).

The protein belongs to the major facilitator superfamily. TsgA family.

It is found in the cell membrane. The polypeptide is Protein TsgA homolog (Buchnera aphidicola subsp. Acyrthosiphon pisum (strain 5A)).